Consider the following 251-residue polypeptide: Blue-light absorbing proteorhodopsin (251 aa).

The signal sequence occupies residues 1-18 (MGKLLLILGSAIALPSFA). The next 7 helical transmembrane spans lie at 30 to 50 (VGVSFWLVTAGMLAATVFFFV), 65 to 85 (VSGLITGIAFWHYLYMRGVWI), 97 to 117 (IDWLLTVPLQVVEFYLILAAC), 120 to 140 (VAASLFKKLLAGSLVMLGAGF), 144 to 164 (AGLAPVLPAFIIGMAGWLYMI), 190 to 210 (MMMIIVVGWAIYPAGYAAGYL), and 223 to 243 (LIYNLADFVNKILFGLIIWNV). Lys233 carries the N6-(retinylidene)lysine modification.

This sequence belongs to the archaeal/bacterial/fungal opsin family. Post-translationally, contains one covalently linked retinal chromophore.

The protein localises to the cell membrane. Light-driven proton pump. May have a regulatory rather than energy harvesting function, based on light-induced opening of proton channels, to modulate cell physiology depending on light intensity variations. Could be, therefore, a sensory rhodopsin, potentially associated with a transducer component. The sequence is that of Blue-light absorbing proteorhodopsin from Gamma-proteobacterium Hot 75m4.